A 163-amino-acid polypeptide reads, in one-letter code: MSSFDIVSELTIHEVRNAVENANRVLSTRYDFRGVDATIELNEKNELIRVTTESDFQLEQLIEILIGCCIKRGIQHTSLDIPSESEHHGKLYTKEIKLKQGIKSDMAKQLVKLIKGSKIKVQAQIQGDSIRITGKSRDDLQSTIQLVKNAELGQPLQFNNFRD.

It belongs to the YajQ family.

Nucleotide-binding protein. The chain is Nucleotide-binding protein HAPS_2236 from Glaesserella parasuis serovar 5 (strain SH0165) (Haemophilus parasuis).